Here is a 145-residue protein sequence, read N- to C-terminus: MRRLRHREVRGPVLGHTATGGPQNGTSGCTTAPQQRPPPGTQGMLEQYLNRGGQKSHGLCWLLCFVSQGQNQDVISAELWCRIHVQAHWGCWQNSAVWGCRNEVLVSLLAVGQGLPSASGGRLPSLVHGPSHPDSQHPREVPLAL.

Disordered stretches follow at residues methionine 1–threonine 41 and arginine 122–leucine 145. The span at glycine 20–glutamine 34 shows a compositional bias: polar residues. A compositionally biased stretch (basic and acidic residues) spans aspartate 134–leucine 145.

Ubiquitous.

This is an uncharacterized protein from Homo sapiens (Human).